The chain runs to 367 residues: Dual-specificity RNA methyltransferase RlmN (367 aa).

Glu91 acts as the Proton acceptor in catalysis. Residues 102–337 (GKVRMTQCLS…AIIRKSKGQD (236 aa)) form the Radical SAM core domain. Cys109 and Cys342 are disulfide-bonded. [4Fe-4S] cluster-binding residues include Cys116, Cys120, and Cys123. S-adenosyl-L-methionine-binding positions include 169 to 170 (GE), Ser201, 223 to 225 (SLH), and Asn299. The S-methylcysteine intermediate role is filled by Cys342.

This sequence belongs to the radical SAM superfamily. RlmN family. The cofactor is [4Fe-4S] cluster.

The protein resides in the cytoplasm. The catalysed reaction is adenosine(2503) in 23S rRNA + 2 reduced [2Fe-2S]-[ferredoxin] + 2 S-adenosyl-L-methionine = 2-methyladenosine(2503) in 23S rRNA + 5'-deoxyadenosine + L-methionine + 2 oxidized [2Fe-2S]-[ferredoxin] + S-adenosyl-L-homocysteine. It carries out the reaction adenosine(37) in tRNA + 2 reduced [2Fe-2S]-[ferredoxin] + 2 S-adenosyl-L-methionine = 2-methyladenosine(37) in tRNA + 5'-deoxyadenosine + L-methionine + 2 oxidized [2Fe-2S]-[ferredoxin] + S-adenosyl-L-homocysteine. Its function is as follows. Specifically methylates position 2 of adenine 2503 in 23S rRNA and position 2 of adenine 37 in tRNAs. m2A2503 modification seems to play a crucial role in the proofreading step occurring at the peptidyl transferase center and thus would serve to optimize ribosomal fidelity. This Nitratidesulfovibrio vulgaris (strain DSM 19637 / Miyazaki F) (Desulfovibrio vulgaris) protein is Dual-specificity RNA methyltransferase RlmN.